Here is a 212-residue protein sequence, read N- to C-terminus: Pyridoxine/pyridoxamine 5'-phosphate oxidase (212 aa).

Substrate contacts are provided by residues Arg-8 to Tyr-11 and Lys-66. FMN-binding positions include Arg-61–Lys-66, Phe-76–Thr-77, Arg-82, Lys-83, and Gln-105. Substrate-binding residues include Tyr-123, Arg-127, and Ser-131. FMN is bound by residues Gln-140–Ser-141 and Trp-185. Position 191 to 193 (Arg-191 to His-193) interacts with substrate. Residue Arg-195 coordinates FMN.

It belongs to the pyridoxamine 5'-phosphate oxidase family. Homodimer. Requires FMN as cofactor.

It carries out the reaction pyridoxamine 5'-phosphate + O2 + H2O = pyridoxal 5'-phosphate + H2O2 + NH4(+). The enzyme catalyses pyridoxine 5'-phosphate + O2 = pyridoxal 5'-phosphate + H2O2. The protein operates within cofactor metabolism; pyridoxal 5'-phosphate salvage; pyridoxal 5'-phosphate from pyridoxamine 5'-phosphate: step 1/1. It participates in cofactor metabolism; pyridoxal 5'-phosphate salvage; pyridoxal 5'-phosphate from pyridoxine 5'-phosphate: step 1/1. In terms of biological role, catalyzes the oxidation of either pyridoxine 5'-phosphate (PNP) or pyridoxamine 5'-phosphate (PMP) into pyridoxal 5'-phosphate (PLP). This is Pyridoxine/pyridoxamine 5'-phosphate oxidase from Shewanella baltica (strain OS223).